Here is a 273-residue protein sequence, read N- to C-terminus: Large ribosomal subunit protein uL2 (273 aa).

The tract at residues 228–273 (VDHPHGGGEGKTSGGRHPVTPWGFPTKGKKTRKNKRTSKFIVKKRK) is disordered. Over residues 254–273 (KGKKTRKNKRTSKFIVKKRK) the composition is skewed to basic residues.

Belongs to the universal ribosomal protein uL2 family. Part of the 50S ribosomal subunit. Forms a bridge to the 30S subunit in the 70S ribosome.

One of the primary rRNA binding proteins. Required for association of the 30S and 50S subunits to form the 70S ribosome, for tRNA binding and peptide bond formation. It has been suggested to have peptidyltransferase activity; this is somewhat controversial. Makes several contacts with the 16S rRNA in the 70S ribosome. The protein is Large ribosomal subunit protein uL2 of Rickettsia akari (strain Hartford).